The primary structure comprises 260 residues: Cytochrome c oxidase subunit 2 (260 aa).

Residues 1–41 (MIVREWLFFTMAPCDAAEPWQLGFQDAATPMMQGIIDLHHD) lie on the Mitochondrial intermembrane side of the membrane. The helical transmembrane segment at 42–58 (IFFFLILILVFVSWILV) threads the bilayer. Residues 59-82 (RALWHFHYKKNPIPQRIVHGTTIE) lie on the Mitochondrial matrix side of the membrane. The chain crosses the membrane as a helical span at residues 83–104 (IIRTIFPSIILMFIAIPSFALL). The Mitochondrial intermembrane segment spans residues 105–260 (YSMDEVVVDP…NQLIPQTGEA (156 aa)). Positions 187, 222, 224, 226, 230, and 233 each coordinate Cu cation. E224 is a Mg(2+) binding site.

It belongs to the cytochrome c oxidase subunit 2 family. In terms of assembly, component of the cytochrome c oxidase (complex IV, CIV), a multisubunit enzyme composed of a catalytic core of 3 subunits and several supernumerary subunits. The complex exists as a monomer or a dimer and forms supercomplexes (SCs) in the inner mitochondrial membrane with ubiquinol-cytochrome c oxidoreductase (cytochrome b-c1 complex, complex III, CIII). Requires Cu cation as cofactor.

The protein localises to the mitochondrion inner membrane. The catalysed reaction is 4 Fe(II)-[cytochrome c] + O2 + 8 H(+)(in) = 4 Fe(III)-[cytochrome c] + 2 H2O + 4 H(+)(out). Its function is as follows. Component of the cytochrome c oxidase, the last enzyme in the mitochondrial electron transport chain which drives oxidative phosphorylation. The respiratory chain contains 3 multisubunit complexes succinate dehydrogenase (complex II, CII), ubiquinol-cytochrome c oxidoreductase (cytochrome b-c1 complex, complex III, CIII) and cytochrome c oxidase (complex IV, CIV), that cooperate to transfer electrons derived from NADH and succinate to molecular oxygen, creating an electrochemical gradient over the inner membrane that drives transmembrane transport and the ATP synthase. Cytochrome c oxidase is the component of the respiratory chain that catalyzes the reduction of oxygen to water. Electrons originating from reduced cytochrome c in the intermembrane space (IMS) are transferred via the dinuclear copper A center (CU(A)) of subunit 2 and heme A of subunit 1 to the active site in subunit 1, a binuclear center (BNC) formed by heme A3 and copper B (CU(B)). The BNC reduces molecular oxygen to 2 water molecules using 4 electrons from cytochrome c in the IMS and 4 protons from the mitochondrial matrix. The polypeptide is Cytochrome c oxidase subunit 2 (COX2) (Beta vulgaris (Sugar beet)).